Reading from the N-terminus, the 669-residue chain is Gametogenetin-binding protein 2 (669 aa).

Disordered regions lie at residues 375 to 421 and 452 to 475; these read QEKK…GNPC and PHSN…SQEG. Positions 376 to 388 are enriched in basic residues; sequence EKKRQKKNRKKNK. A compositionally biased stretch (polar residues) spans 398–408; the sequence is ETKSANPSQKN.

The protein localises to the cytoplasm. May be involved in spermatogenesis. This is Gametogenetin-binding protein 2 (ggnbp2) from Xenopus tropicalis (Western clawed frog).